A 125-amino-acid polypeptide reads, in one-letter code: Fluoride-specific ion channel FluC (125 aa).

4 helical membrane-spanning segments follow: residues 4 to 24 (IALVATGGAIGSVFRYLVGVW), 35 to 55 (WGTLAVNIVGSFLIGLLVELV), 68 to 88 (FLVTGVLGGFTTFSSFSLDAV), and 100 to 120 (AFYILASLVVSIAAVFAGLAL). 2 residues coordinate Na(+): Gly75 and Thr78.

The protein belongs to the fluoride channel Fluc/FEX (TC 1.A.43) family.

The protein resides in the cell inner membrane. The enzyme catalyses fluoride(in) = fluoride(out). Na(+) is not transported, but it plays an essential structural role and its presence is essential for fluoride channel function. Fluoride-specific ion channel. Important for reducing fluoride concentration in the cell, thus reducing its toxicity. The polypeptide is Fluoride-specific ion channel FluC (Agrobacterium fabrum (strain C58 / ATCC 33970) (Agrobacterium tumefaciens (strain C58))).